A 646-amino-acid polypeptide reads, in one-letter code: Stage V sporulation protein D (646 aa).

Residue S294 is the Acyl-ester intermediate of the active site. Residues 580-638 form the PASTA domain; it reads DTKTIEVPNVVGMSVSDLESLLVNLNVDASGKGSKIVKQSPAAGTKVKEGSKIRVYLTE.

It belongs to the transpeptidase family.

Its subcellular location is the cell membrane. It carries out the reaction Preferential cleavage: (Ac)2-L-Lys-D-Ala-|-D-Ala. Also transpeptidation of peptidyl-alanyl moieties that are N-acyl substituents of D-alanine.. The protein operates within cell wall biogenesis; peptidoglycan biosynthesis. In terms of biological role, penicillin-binding protein with an unknown catalytic activity. May have a specialized role in the morphogenesis of spore cortex, which is a modified form of peptidoglycan. Spore cortex formation is determined primarily by the mother cell. This chain is Stage V sporulation protein D (spoVD), found in Bacillus subtilis (strain 168).